The sequence spans 292 residues: NIF3-like protein 1 (292 aa).

The protein belongs to the GTP cyclohydrolase I type 2/NIF3 family.

This is NIF3-like protein 1 (anon-35F/36A) from Drosophila melanogaster (Fruit fly).